Reading from the N-terminus, the 500-residue chain is Hexose transporter 1 (500 aa).

The Cytoplasmic segment spans residues 1-25 (MKNSNEISSSQSLKNNGSDGFFNTS). The chain crosses the membrane as a helical span at residues 26-46 (LMYVLAACLASFLFGYQVSVL). Over 47–75 (NTIKDFIVIEFGWCAGKEVNCDDSTLKSS) the chain is Extracellular. A disulfide bridge links cysteine 60 with cysteine 67. The helical transmembrane segment at 76–96 (FLLASVFIGAVVGSGFSGFLV) threads the bilayer. The Cytoplasmic portion of the chain corresponds to 97–101 (QHGRR). Residues 102-122 (FSLLVIYNFFILVSILTSITH) traverse the membrane as a helical segment. The Extracellular portion of the chain corresponds to 123 to 131 (HFHTILFSR). A helical membrane pass occupies residues 132-152 (LLSGFGIGLITVSVPMYISEM). At 153–166 (THKDKKGAYGVLHQ) the chain is on the cytoplasmic side. Glutamine 166 provides a ligand contact to alpha-D-glucose. Beta-D-glucose is bound at residue glutamine 166. Residues 167-187 (LFITFGIFIAVLLGMAMGNVP) form a helical membrane-spanning segment. The Extracellular segment spans residues 188–203 (EEVNNPLGTFQQIWWR). A helical transmembrane segment spans residues 204 to 224 (LMFFFPCIISILGIVLLTFFF). The Cytoplasmic portion of the chain corresponds to 225–289 (KEETPYYLFE…RAMKIPSYRY (65 aa)). A helical membrane pass occupies residues 290–310 (VILLGCILSGLQQFTGINVLV). Positions 301, 302, and 307 each coordinate alpha-D-glucose. Glutamine 301 is a beta-D-glucose binding site. Position 307 (asparagine 307) interacts with beta-D-glucose. Residues 311–327 (SNSNALYKGFLTNEWIT) are Extracellular-facing. A helical membrane pass occupies residues 328–348 (TLSVIMTVVNFLMTFPAIYIV). A beta-D-glucose-binding site is contributed by asparagine 337. The Cytoplasmic portion of the chain corresponds to 349–356 (EKLGRKTL). The helical transmembrane segment at 357 to 377 (LLCGCAGIVCAFLPTAIANLI) threads the bilayer. Residues 378–390 (NNTSDVVKKLSIS) are Extracellular-facing. Residues 391–411 (ATFVMIVSFAVSYGPVLWIYL) form a helical membrane-spanning segment. Tryptophan 408 lines the alpha-D-glucose pocket. Residues 412–425 (HEMFPSEIKDSAAS) are Cytoplasmic-facing. The chain crosses the membrane as a helical span at residues 426–446 (LASLVNWMCAIIVVFPSDIII). Residues 447–451 (KQSPT) are Extracellular-facing. A helical transmembrane segment spans residues 452–472 (ILFFIFSGMSIVAFLFIFFFI). Over 473-500 (KETKGGEIGTSPYITLEERQKHMGKSVV) the chain is Cytoplasmic.

Belongs to the major facilitator superfamily. Sugar transporter (TC 2.A.1.1) family. In terms of assembly, homodimer.

It localises to the cell membrane. The catalysed reaction is D-glucose(out) = D-glucose(in). The enzyme catalyses D-fructose(out) = D-fructose(in). It carries out the reaction D-galactose(in) = D-galactose(out). It catalyses the reaction D-mannose(out) = D-mannose(in). The catalysed reaction is D-glucosamine(out) = D-glucosamine(in). The enzyme catalyses D-xylose(out) = D-xylose(in). Inhibited by cytochalasin B. Functionally, sodium-independent facilitative hexose transporter. Can transport D-glucose and D-fructose. Can transport D-mannose, D-galactose, D-xylose and D-glucosamine. The sequence is that of Hexose transporter 1 from Plasmodium knowlesi.